A 288-amino-acid polypeptide reads, in one-letter code: Aquaporin NIP2-1 (288 aa).

N-acetylmethionine is present on M1. A run of 2 helical transmembrane segments spans residues 50–70 and 77–97; these read LLAE…AIAV and VVTL…LVYC. Residues 106 to 108 carry the NPA 1 motif; it reads NPA. A run of 3 helical transmembrane segments spans residues 126–146, 170–190, and 202–222; these read AYIT…RLLF, LQAF…VCAV, and GLII…VSGA. The NPA 2 signature appears at 225-227; sequence NPA. A helical transmembrane segment spans residues 234–254; that stretch reads LVWGCYKGIWIYLLAPTLGAV. Residue S278 is modified to Phosphoserine.

It belongs to the MIP/aquaporin (TC 1.A.8) family. NIP (TC 1.A.8.12) subfamily. In terms of tissue distribution, specifically expressed in roots with high expression in root elongation zone and root stele.

It is found in the endoplasmic reticulum membrane. Functionally, low water transport activity in yeast cells. The chain is Aquaporin NIP2-1 (NIP2-1) from Arabidopsis thaliana (Mouse-ear cress).